We begin with the raw amino-acid sequence, 197 residues long: Protein GrpE (197 aa).

Residues 1–43 (MSSKEQKTPDGQAPEEIVTEQHEEVESVESAESAEQVDPRDEE) form a disordered region.

Belongs to the GrpE family. Homodimer.

The protein localises to the cytoplasm. Participates actively in the response to hyperosmotic and heat shock by preventing the aggregation of stress-denatured proteins, in association with DnaK and GrpE. It is the nucleotide exchange factor for DnaK and may function as a thermosensor. Unfolded proteins bind initially to DnaJ; upon interaction with the DnaJ-bound protein, DnaK hydrolyzes its bound ATP, resulting in the formation of a stable complex. GrpE releases ADP from DnaK; ATP binding to DnaK triggers the release of the substrate protein, thus completing the reaction cycle. Several rounds of ATP-dependent interactions between DnaJ, DnaK and GrpE are required for fully efficient folding. This Cronobacter sakazakii (strain ATCC BAA-894) (Enterobacter sakazakii) protein is Protein GrpE.